Consider the following 474-residue polypeptide: 3-isopropylmalate dehydratase large subunit (474 aa).

[4Fe-4S] cluster contacts are provided by cysteine 353, cysteine 414, and cysteine 417.

It belongs to the aconitase/IPM isomerase family. LeuC type 1 subfamily. In terms of assembly, heterodimer of LeuC and LeuD. [4Fe-4S] cluster serves as cofactor.

The catalysed reaction is (2R,3S)-3-isopropylmalate = (2S)-2-isopropylmalate. It functions in the pathway amino-acid biosynthesis; L-leucine biosynthesis; L-leucine from 3-methyl-2-oxobutanoate: step 2/4. In terms of biological role, catalyzes the isomerization between 2-isopropylmalate and 3-isopropylmalate, via the formation of 2-isopropylmaleate. The sequence is that of 3-isopropylmalate dehydratase large subunit from Xylella fastidiosa (strain M23).